The following is a 229-amino-acid chain: Chromophore lyase CpcT/CpeT 1 (229 aa).

This sequence belongs to the CpcT/CpeT biliprotein lyase family.

Functionally, covalently attaches a chromophore to Cys residue(s) of phycobiliproteins. This is Chromophore lyase CpcT/CpeT 1 from Gloeobacter violaceus (strain ATCC 29082 / PCC 7421).